Here is a 330-residue protein sequence, read N- to C-terminus: uncharacterized protein (330 aa).

An ABC transporter domain is found at 4–242; it reads LTISDLVVEY…AGEVLFEQST (239 aa). 40–47 contacts ATP; the sequence is GPSGCGKT. A nucleoside 3',5'-cyclic phosphate is bound at residue 210–330; sequence DRVLELMPAQ…LIEHRELASE (121 aa).

The protein belongs to the ABC transporter superfamily.

This is an uncharacterized protein from Mycobacterium bovis (strain ATCC BAA-935 / AF2122/97).